The chain runs to 397 residues: Phosphoglycerate kinase (397 aa).

Substrate is bound by residues 22–24, Arg-37, 60–63, Arg-119, and Arg-152; these read DLN and HFGR. Residues Lys-202, Glu-324, and 354-357 each bind ATP; that span reads GGDT.

Belongs to the phosphoglycerate kinase family. Monomer.

The protein resides in the cytoplasm. It carries out the reaction (2R)-3-phosphoglycerate + ATP = (2R)-3-phospho-glyceroyl phosphate + ADP. The protein operates within carbohydrate degradation; glycolysis; pyruvate from D-glyceraldehyde 3-phosphate: step 2/5. This is Phosphoglycerate kinase from Rhizorhabdus wittichii (strain DSM 6014 / CCUG 31198 / JCM 15750 / NBRC 105917 / EY 4224 / RW1) (Sphingomonas wittichii).